A 307-amino-acid polypeptide reads, in one-letter code: MAGLFSSAVAPTERRKALRAALAAPEIARMPGAFSPLAARAIQEAGFEGVYVSGAVVAADLALPDIGLTTLTEVAHRSRQIARVTDLPVLVDADTGFGEPMSAARTVSELEDAGVAGCHLEDQVNPKRCGHLDGKEVVGTDIMVRRIAAAVNERRDEQFVICARTDAAGVEGIDSAIERAKAYADAGADMIFTEALYSPADFEKFRAAVDIPLLANMTEFGKTELLPAQLLEDIGYNAVIYPVTLLRIAMGQVEQALGDIANTGIQTDWVDRMQHRSRLYELLRYNEYNAFDQQVFTYSADSYKPIF.

Residue 53–55 (SGA) coordinates substrate. The Mg(2+) site is built by aspartate 92 and aspartate 94. Residues 129-130 (CG), arginine 164, glutamate 194, 216-218 (NMT), arginine 247, and arginine 276 each bind substrate.

This sequence belongs to the isocitrate lyase/PEP mutase superfamily. Methylisocitrate lyase family. Homotetramer; dimer of dimers. It depends on Mg(2+) as a cofactor.

It catalyses the reaction (2S,3R)-3-hydroxybutane-1,2,3-tricarboxylate = pyruvate + succinate. It functions in the pathway organic acid metabolism; propanoate degradation. In terms of biological role, involved in the catabolism of short chain fatty acids (SCFA) via the 2-methylcitrate cycle I (propionate degradation route). Catalyzes the thermodynamically favored C-C bond cleavage of (2R,3S)-2-methylisocitrate to yield pyruvate and succinate via an alpha-carboxy-carbanion intermediate. In Corynebacterium glutamicum (strain ATCC 13032 / DSM 20300 / JCM 1318 / BCRC 11384 / CCUG 27702 / LMG 3730 / NBRC 12168 / NCIMB 10025 / NRRL B-2784 / 534), this protein is Probable 2-methylisocitrate lyase 2.